A 208-amino-acid chain; its full sequence is Protein JLP2 (208 aa).

Residues 185 to 194 show a composition bias toward basic residues; sequence AKKNQKKKNK. The tract at residues 185–208 is disordered; sequence AKKNQKKKNKQSKDEVTDDMQLEV.

The protein belongs to the CCDC25 family.

The protein resides in the cytoplasm. The polypeptide is Protein JLP2 (JLP2) (Saccharomyces cerevisiae (strain ATCC 204508 / S288c) (Baker's yeast)).